Here is a 604-residue protein sequence, read N- to C-terminus: UvrABC system protein C (604 aa).

The 78-residue stretch at 14 to 91 (ESPGVYRMLD…IKEQRPPYNI (78 aa)) folds into the GIY-YIG domain. The region spanning 202-237 (EQVTAQLTRDMETASQALDFEEAARLRDQIQQLRRL) is the UVR domain. Positions 538–557 (GHRQQRDKQRRTSTLQDIPG) are disordered.

The protein belongs to the UvrC family. As to quaternary structure, interacts with UvrB in an incision complex.

It localises to the cytoplasm. Its function is as follows. The UvrABC repair system catalyzes the recognition and processing of DNA lesions. UvrC both incises the 5' and 3' sides of the lesion. The N-terminal half is responsible for the 3' incision and the C-terminal half is responsible for the 5' incision. The sequence is that of UvrABC system protein C from Chromohalobacter salexigens (strain ATCC BAA-138 / DSM 3043 / CIP 106854 / NCIMB 13768 / 1H11).